We begin with the raw amino-acid sequence, 420 residues long: Probable acetate kinase (420 aa).

N10 is a binding site for Mg(2+). K17 contributes to the ATP binding site. Residue R97 participates in substrate binding. Catalysis depends on D153, which acts as the Proton donor/acceptor. Residue 213–217 (HIGSG) participates in ATP binding. E403 contributes to the Mg(2+) binding site.

This sequence belongs to the acetokinase family. Mg(2+) serves as cofactor.

The catalysed reaction is acetate + ATP = acetyl phosphate + ADP. Its pathway is metabolic intermediate biosynthesis; acetyl-CoA biosynthesis; acetyl-CoA from acetate: step 1/2. The chain is Probable acetate kinase from Emericella nidulans (strain FGSC A4 / ATCC 38163 / CBS 112.46 / NRRL 194 / M139) (Aspergillus nidulans).